The chain runs to 865 residues: Carbohydrate-responsive element-binding protein (865 aa).

2 disordered regions span residues 15–41 (PRVVPSPDSDSDTDLEDPSPRRSAGGL) and 53–77 (MVSSPHSDSLTRRRDQEGPVGLADF). Phosphoserine occurs at positions 20, 23, and 25. Thr27 bears the Phosphothreonine mark. Phosphoserine is present on Ser196. Disordered stretches follow at residues 334–392 (GILG…TKMP) and 500–653 (QPRC…LSRG). A compositionally biased stretch (polar residues) spans 351 to 368 (GMTPLSGNTRLQARNSCS). Over residues 515-533 (ASPPTLTSATASPTATATA) the composition is skewed to low complexity. Ser568 carries the post-translational modification Phosphoserine; by AMPK. Residues 583-597 (PPIPAPTPPRPPPGP) are compositionally biased toward pro residues. Phosphoserine is present on residues Ser615, Ser627, and Ser644. In terms of domain architecture, bHLH spans 662–716 (NRRITHISAEQKRRFNIKLGFDTLHGLVSTLSAQPSLKVSKATTLQKTAEYILML). The leucine-zipper stretch occupies residues 716-737 (LQQERAAMQEEAQQLRDEIEEL).

In terms of assembly, binds DNA as a heterodimer with TCFL4/MLX. Post-translationally, phosphorylation at Ser-568 by AMPK inactivates the DNA-binding activity.

It is found in the nucleus. Functionally, transcriptional repressor. Binds to the canonical and non-canonical E box sequences 5'-CACGTG-3'. The chain is Carbohydrate-responsive element-binding protein (Mlxipl) from Rattus norvegicus (Rat).